A 393-amino-acid polypeptide reads, in one-letter code: Protein TsgA (393 aa).

A run of 12 helical transmembrane segments spans residues 11-31 (WISF…GMVM), 51-71 (FLNA…EIVP), 78-98 (FGFL…SLAL), 101-121 (AAMF…TFLV), 134-154 (LLFT…IAAF), 162-182 (WYWV…LTFG), 206-226 (IGVL…LGFI), 245-265 (TLVS…SFIL), 273-293 (ILTV…TGTP), 297-317 (AWSI…IITL), 332-352 (FVLT…GPIV), and 361-381 (LLTA…LGFV).

The protein belongs to the major facilitator superfamily. TsgA family.

The protein localises to the cell inner membrane. The chain is Protein TsgA from Escherichia coli O6:K15:H31 (strain 536 / UPEC).